We begin with the raw amino-acid sequence, 156 residues long: MPIDQEKLAKLQKMSAGNKVGGTRRKQAKKTGSGSAGNKDDTKLHNQLAKLHAVTIDNVAEANFFKDDGKVLHFNKVGVQVAPQHNTSVFYGMAQEKNLQELFPGIISQLGGEAIQALSQLAAQMEKAQANENAGEAKDEAIPELVEGQSFDAEVE.

2 disordered regions span residues 1–42 and 129–156; these read MPID…KDDT and QANE…AEVE. The NAC-A/B domain maps to 38–103; the sequence is NKDDTKLHNQ…AQEKNLQELF (66 aa).

Belongs to the NAC-beta family. Part of the nascent polypeptide-associated complex (NAC), consisting of EGD2 and EGD1. NAC associates with ribosomes via EGD1.

Its subcellular location is the cytoplasm. It is found in the nucleus. Functionally, component of the nascent polypeptide-associated complex (NAC), a dynamic component of the ribosomal exit tunnel, protecting the emerging polypeptides from interaction with other cytoplasmic proteins to ensure appropriate nascent protein targeting. The NAC complex also promotes mitochondrial protein import by enhancing productive ribosome interactions with the outer mitochondrial membrane and blocks the inappropriate interaction of ribosomes translating non-secretory nascent polypeptides with translocation sites in the membrane of the endoplasmic reticulum. EGD1 may act as a transcription factor that exert a negative effect on the expression of several genes that are transcribed by RNA polymerase II. The sequence is that of Nascent polypeptide-associated complex subunit beta (EGD1) from Candida glabrata (strain ATCC 2001 / BCRC 20586 / JCM 3761 / NBRC 0622 / NRRL Y-65 / CBS 138) (Yeast).